The chain runs to 245 residues: 1-(5-phosphoribosyl)-5-[(5-phosphoribosylamino)methylideneamino] imidazole-4-carboxamide isomerase (245 aa).

The Proton acceptor role is filled by D8. D131 serves as the catalytic Proton donor.

The protein belongs to the HisA/HisF family.

Its subcellular location is the cytoplasm. The enzyme catalyses 1-(5-phospho-beta-D-ribosyl)-5-[(5-phospho-beta-D-ribosylamino)methylideneamino]imidazole-4-carboxamide = 5-[(5-phospho-1-deoxy-D-ribulos-1-ylimino)methylamino]-1-(5-phospho-beta-D-ribosyl)imidazole-4-carboxamide. Its pathway is amino-acid biosynthesis; L-histidine biosynthesis; L-histidine from 5-phospho-alpha-D-ribose 1-diphosphate: step 4/9. The polypeptide is 1-(5-phosphoribosyl)-5-[(5-phosphoribosylamino)methylideneamino] imidazole-4-carboxamide isomerase (Neisseria meningitidis serogroup C (strain 053442)).